Consider the following 549-residue polypeptide: Oxygen-dependent choline dehydrogenase (549 aa).

Asp-4–Glu-33 is a binding site for FAD. The Proton acceptor role is filled by His-465.

The protein belongs to the GMC oxidoreductase family. The cofactor is FAD.

It carries out the reaction choline + A = betaine aldehyde + AH2. The enzyme catalyses betaine aldehyde + NAD(+) + H2O = glycine betaine + NADH + 2 H(+). Its pathway is amine and polyamine biosynthesis; betaine biosynthesis via choline pathway; betaine aldehyde from choline (cytochrome c reductase route): step 1/1. Involved in the biosynthesis of the osmoprotectant glycine betaine. Catalyzes the oxidation of choline to betaine aldehyde and betaine aldehyde to glycine betaine at the same rate. The sequence is that of Oxygen-dependent choline dehydrogenase from Rhizobium johnstonii (strain DSM 114642 / LMG 32736 / 3841) (Rhizobium leguminosarum bv. viciae).